The sequence spans 564 residues: MLKKLFFILSKEDKNFLFFLLVFSVFISFIETFAISLVMPFITLASDFSYFDRNKYLISLKEYLNIPVFEIIVYFGVGLIVFYVFRALLNAYYFHLLARFSKGRYHAIAYKVFSKFLNINYEKFTQKNQSEILKSITGEVYNLSTMISSFLLLMSEIFVVLLLYALMLLINYKITLFLSIFMVLNAFILVKILSPIIKKAGVRREEAMKNFFEILNTNLNNFKFIKLKTKEDGVLSLFKAQSEAFSKANITNESVAAVPRIYLEGIGFCVLVFIVVFLVLKNESDISGILSTISIFVLALYRLMPSANRIITSYHDLLYYHSSLDIIYQNLRQEEENLGEEKLSFNQELKICNLSFGYEGKKYLFKNLNLNIKKGEKIAFIGESGCGKSTLVDLIIGLLKPKEGQILIDEQELNANNTKNYRQKIGYIPQNIYLFNDSIAKNITFGDAVDEEKLNRVIKQANLEHFIKNLPQGVQTKVGDGGSNLSGGQKQRIAIARALYLEPEMLVLDEATSALDTQSEAKIMDEIYKISKDKTMIIIAHRLSTITQCDKVYRLEHGKLKEEK.

Topologically, residues 1–15 are cytoplasmic; it reads MLKKLFFILSKEDKN. A helical transmembrane segment spans residues 16 to 38; that stretch reads FLFFLLVFSVFISFIETFAISLV. The ABC transmembrane type-1 domain occupies 17-319; sequence LFFLLVFSVF…IITSYHDLLY (303 aa). Topologically, residues 39-76 are extracellular; it reads MPFITLASDFSYFDRNKYLISLKEYLNIPVFEIIVYFG. The important for stimulation of ATPase activity by lipid-linked oligosaccharides and subsequent translocation of lipid-linked oligosaccharides stretch occupies residues 46–67; sequence SDFSYFDRNKYLISLKEYLNIP. The chain crosses the membrane as a helical span at residues 77-98; that stretch reads VGLIVFYVFRALLNAYYFHLLA. The Cytoplasmic segment spans residues 99–149; that stretch reads RFSKGRYHAIAYKVFSKFLNINYEKFTQKNQSEILKSITGEVYNLSTMISS. A helical membrane pass occupies residues 150-170; the sequence is FLLLMSEIFVVLLLYALMLLI. Over 171–173 the chain is Extracellular; that stretch reads NYK. Residues 174–197 traverse the membrane as a helical segment; the sequence is ITLFLSIFMVLNAFILVKILSPII. Topologically, residues 198–254 are cytoplasmic; sequence KKAGVRREEAMKNFFEILNTNLNNFKFIKLKTKEDGVLSLFKAQSEAFSKANITNES. A helical transmembrane segment spans residues 255 to 276; it reads VAAVPRIYLEGIGFCVLVFIVV. Residues 277–292 lie on the Extracellular side of the membrane; that stretch reads FLVLKNESDISGILST. The helical transmembrane segment at 293–314 threads the bilayer; it reads ISIFVLALYRLMPSANRIITSY. The Cytoplasmic segment spans residues 315 to 564; sequence HDLLYYHSSL…LEHGKLKEEK (250 aa). Positions 349–564 constitute an ABC transporter domain; it reads LKICNLSFGY…LEHGKLKEEK (216 aa). 382–389 is a binding site for ATP; it reads GESGCGKS.

It belongs to the ABC transporter superfamily. Homodimer; domain-swapped. Helices that arise in transmembrane regions 4 and 5 from one subunit cross over and contact the nucleotide-binding domain from the other subunit.

Its subcellular location is the cell inner membrane. It carries out the reaction ATP + H2O + lipopolysaccharideSide 1 = ADP + phosphate + lipopolysaccharideSide 2.. Its pathway is protein modification; protein glycosylation. In terms of biological role, mediates the ATP-dependent translocation of the undecaprenylpyrophosphate-linked heptasaccharide intermediate across the cell membrane; this is an essential step during the N-linked protein glycosylation pathway. Transport across the membrane is effected via ATP-driven conformation changes. Most likely, only the polar and charged part of the glycolipid enter the substrate-binding cavity, and the lipid tail remains exposed to the membrane lipids during the transmembrane flipping process. In Campylobacter jejuni subsp. jejuni serotype O:2 (strain ATCC 700819 / NCTC 11168), this protein is Protein glycosylation K (pglK).